The sequence spans 462 residues: ATP synthase subunit beta 1 (462 aa).

152–159 (GGAGVGKT) contacts ATP.

Belongs to the ATPase alpha/beta chains family. In terms of assembly, F-type ATPases have 2 components, CF(1) - the catalytic core - and CF(0) - the membrane proton channel. CF(1) has five subunits: alpha(3), beta(3), gamma(1), delta(1), epsilon(1). CF(0) has four main subunits: a(1), b(1), b'(1) and c(9-12).

Its subcellular location is the cell inner membrane. It carries out the reaction ATP + H2O + 4 H(+)(in) = ADP + phosphate + 5 H(+)(out). Its function is as follows. Produces ATP from ADP in the presence of a proton gradient across the membrane. The catalytic sites are hosted primarily by the beta subunits. This Dinoroseobacter shibae (strain DSM 16493 / NCIMB 14021 / DFL 12) protein is ATP synthase subunit beta 1.